A 369-amino-acid chain; its full sequence is Homoserine O-acetyltransferase (369 aa).

Residues asparagine 44–glutamate 350 form the AB hydrolase-1 domain. The active-site Nucleophile is serine 150. Arginine 217 is a binding site for substrate. Active-site residues include aspartate 311 and histidine 344. Aspartate 345 contacts substrate.

Belongs to the AB hydrolase superfamily. MetX family. In terms of assembly, homodimer.

The protein resides in the cytoplasm. The catalysed reaction is L-homoserine + acetyl-CoA = O-acetyl-L-homoserine + CoA. The protein operates within amino-acid biosynthesis; L-methionine biosynthesis via de novo pathway; O-acetyl-L-homoserine from L-homoserine: step 1/1. Transfers an acetyl group from acetyl-CoA to L-homoserine, forming acetyl-L-homoserine. In Geobacter metallireducens (strain ATCC 53774 / DSM 7210 / GS-15), this protein is Homoserine O-acetyltransferase.